Reading from the N-terminus, the 232-residue chain is 2,3,4,5-tetrahydropyridine-2,6-dicarboxylate N-acetyltransferase (232 aa).

It belongs to the transferase hexapeptide repeat family. DapH subfamily.

It catalyses the reaction (S)-2,3,4,5-tetrahydrodipicolinate + acetyl-CoA + H2O = L-2-acetamido-6-oxoheptanedioate + CoA. It functions in the pathway amino-acid biosynthesis; L-lysine biosynthesis via DAP pathway; LL-2,6-diaminopimelate from (S)-tetrahydrodipicolinate (acetylase route): step 1/3. Its function is as follows. Catalyzes the transfer of an acetyl group from acetyl-CoA to tetrahydrodipicolinate. The polypeptide is 2,3,4,5-tetrahydropyridine-2,6-dicarboxylate N-acetyltransferase (Streptococcus pneumoniae serotype 4 (strain ATCC BAA-334 / TIGR4)).